The primary structure comprises 250 residues: Ubiquinone/menaquinone biosynthesis C-methyltransferase UbiE (250 aa).

Residues threonine 74, aspartate 94, 122–123 (DA), and serine 139 each bind S-adenosyl-L-methionine.

This sequence belongs to the class I-like SAM-binding methyltransferase superfamily. MenG/UbiE family.

The enzyme catalyses a 2-demethylmenaquinol + S-adenosyl-L-methionine = a menaquinol + S-adenosyl-L-homocysteine + H(+). It catalyses the reaction a 2-methoxy-6-(all-trans-polyprenyl)benzene-1,4-diol + S-adenosyl-L-methionine = a 5-methoxy-2-methyl-3-(all-trans-polyprenyl)benzene-1,4-diol + S-adenosyl-L-homocysteine + H(+). It functions in the pathway quinol/quinone metabolism; menaquinone biosynthesis; menaquinol from 1,4-dihydroxy-2-naphthoate: step 2/2. The protein operates within cofactor biosynthesis; ubiquinone biosynthesis. Functionally, methyltransferase required for the conversion of demethylmenaquinol (DMKH2) to menaquinol (MKH2) and the conversion of 2-polyprenyl-6-methoxy-1,4-benzoquinol (DDMQH2) to 2-polyprenyl-3-methyl-6-methoxy-1,4-benzoquinol (DMQH2). The polypeptide is Ubiquinone/menaquinone biosynthesis C-methyltransferase UbiE (Ruegeria sp. (strain TM1040) (Silicibacter sp.)).